The sequence spans 104 residues: L-rhamnose mutarotase (104 aa).

Residue Tyr-18 coordinates substrate. The Proton donor role is filled by His-22. Substrate-binding positions include Tyr-41 and 76 to 77 (WW).

Belongs to the rhamnose mutarotase family. In terms of assembly, homodimer.

The protein localises to the cytoplasm. The enzyme catalyses alpha-L-rhamnose = beta-L-rhamnose. It participates in carbohydrate metabolism; L-rhamnose metabolism. Involved in the anomeric conversion of L-rhamnose. The chain is L-rhamnose mutarotase from Yersinia pseudotuberculosis serotype O:1b (strain IP 31758).